Here is a 324-residue protein sequence, read N- to C-terminus: Probable 6-phosphogluconolactonase 4, chloroplastic (324 aa).

Residues 1 to 61 (MSVSAAVAAA…RAPAMATDCA (61 aa)) constitute a chloroplast transit peptide. Residues 20–43 (RRRSPPASRVAATSRGRPFSSGPH) form a disordered region. A compositionally biased stretch (low complexity) spans 24-34 (PPASRVAATSR).

Belongs to the glucosamine/galactosamine-6-phosphate isomerase family. 6-phosphogluconolactonase subfamily.

Its subcellular location is the plastid. The protein localises to the chloroplast. The enzyme catalyses 6-phospho-D-glucono-1,5-lactone + H2O = 6-phospho-D-gluconate + H(+). The protein operates within carbohydrate degradation; pentose phosphate pathway; D-ribulose 5-phosphate from D-glucose 6-phosphate (oxidative stage): step 2/3. Functionally, hydrolysis of 6-phosphogluconolactone to 6-phosphogluconate. The chain is Probable 6-phosphogluconolactonase 4, chloroplastic from Oryza sativa subsp. indica (Rice).